The sequence spans 133 residues: Large-conductance mechanosensitive channel (133 aa).

2 helical membrane passes run 19 to 39 and 79 to 99; these read IDLAVGVVIGGAFGKIVTSLV and IQSVVDFIIISFSIFLFVKLI.

Belongs to the MscL family. Homopentamer.

It localises to the cell membrane. Channel that opens in response to stretch forces in the membrane lipid bilayer. May participate in the regulation of osmotic pressure changes within the cell. The chain is Large-conductance mechanosensitive channel from Clostridium tetani (strain Massachusetts / E88).